A 122-amino-acid chain; its full sequence is Ribosome-binding factor A (122 aa).

It belongs to the RbfA family. As to quaternary structure, monomer. Binds 30S ribosomal subunits, but not 50S ribosomal subunits or 70S ribosomes.

It is found in the cytoplasm. Functionally, one of several proteins that assist in the late maturation steps of the functional core of the 30S ribosomal subunit. Associates with free 30S ribosomal subunits (but not with 30S subunits that are part of 70S ribosomes or polysomes). Required for efficient processing of 16S rRNA. May interact with the 5'-terminal helix region of 16S rRNA. The protein is Ribosome-binding factor A of Cupriavidus pinatubonensis (strain JMP 134 / LMG 1197) (Cupriavidus necator (strain JMP 134)).